The sequence spans 390 residues: Pepsin B (390 aa).

Positions 1–16 (MKIQVLVLVCLHLSEG) are cleaved as a signal peptide. Positions 17–59 (VERIILKKGKSIRQVMEERGVLETFLRNHPKVDPAAKYLFNND) are cleaved as a propeptide — activation peptide. Positions 74-387 (YFGEISIGTP…DMAANRVGFA (314 aa)) constitute a Peptidase A1 domain. The active site involves D92. 2 disulfide bridges follow: C105–C110 and C269–C273. D278 is a catalytic residue. An intrachain disulfide couples C312 to C345.

It belongs to the peptidase A1 family.

It localises to the secreted. It catalyses the reaction Degradation of gelatin, little activity on hemoglobin. Specificity on B chain of insulin more restricted than that of pepsin A. Does not cleave 1-Phe-|-Val-2, 4-Gln-|-His-5 or 23-Gly-|-Phe-24.. Functionally, hydrolyzes various peptides including beta-endorphin, insulin B chain, dynorphin A, and neurokinin A, with high specificity for the cleavage of the Phe-Xaa bonds. The protein is Pepsin B (PGB) of Canis lupus familiaris (Dog).